We begin with the raw amino-acid sequence, 418 residues long: Putative ion-transport protein YfeO (418 aa).

12 helical membrane-spanning segments follow: residues 10-30 (LLLS…LIVV), 54-74 (DSPF…GLVI), 99-119 (ALLG…SLGP), 120-140 (EHPI…RLLP), 149-169 (ILAS…AALI), 186-206 (LFAP…FFHP), 223-243 (ILSG…AVWC), 258-278 (VLVL…GGPV), 300-320 (DYFL…ASGF), 322-342 (GGRI…LHEH), 343-363 (VPAV…VLVV), and 371-391 (LFMA…CIVM).

Belongs to the chloride channel (TC 2.A.49) family.

The protein resides in the cell membrane. This Escherichia coli O17:K52:H18 (strain UMN026 / ExPEC) protein is Putative ion-transport protein YfeO.